A 475-amino-acid chain; its full sequence is Dihydrolipoyl dehydrogenase (475 aa).

Residues 36 to 45, lysine 54, and glycine 117 each bind FAD; that span reads ERYNTLGGVC. Residues cysteine 45 and cysteine 50 are joined by a disulfide bond. NAD(+)-binding positions include 182-186, glutamate 205, valine 238, and 270-273; these read GGGII and AIGR. Residues aspartate 313 and alanine 321 each coordinate FAD. The active-site Proton acceptor is histidine 445.

The protein belongs to the class-I pyridine nucleotide-disulfide oxidoreductase family. It depends on FAD as a cofactor.

The protein resides in the cytoplasm. It catalyses the reaction N(6)-[(R)-dihydrolipoyl]-L-lysyl-[protein] + NAD(+) = N(6)-[(R)-lipoyl]-L-lysyl-[protein] + NADH + H(+). Functionally, the branched-chain alpha-keto dehydrogenase complex catalyzes the overall conversion of alpha-keto acids to acyl-CoA and CO(2). It contains multiple copies of 3 enzymatic components: branched-chain alpha-keto acid decarboxylase (E1), lipoamide acyltransferase (E2) and lipoamide dehydrogenase (E3). The protein is Dihydrolipoyl dehydrogenase (lpd) of Vibrio cholerae serotype O1 (strain ATCC 39315 / El Tor Inaba N16961).